A 314-amino-acid chain; its full sequence is 4-hydroxy-3-methylbut-2-enyl diphosphate reductase (314 aa).

[4Fe-4S] cluster is bound at residue cysteine 12. Histidine 41 and histidine 74 together coordinate (2E)-4-hydroxy-3-methylbut-2-enyl diphosphate. The dimethylallyl diphosphate site is built by histidine 41 and histidine 74. Positions 41 and 74 each coordinate isopentenyl diphosphate. Cysteine 96 provides a ligand contact to [4Fe-4S] cluster. Histidine 124 provides a ligand contact to (2E)-4-hydroxy-3-methylbut-2-enyl diphosphate. Histidine 124 is a dimethylallyl diphosphate binding site. Histidine 124 lines the isopentenyl diphosphate pocket. Glutamate 126 functions as the Proton donor in the catalytic mechanism. Threonine 167 is a binding site for (2E)-4-hydroxy-3-methylbut-2-enyl diphosphate. Cysteine 197 contributes to the [4Fe-4S] cluster binding site. Positions 225, 226, 227, and 269 each coordinate (2E)-4-hydroxy-3-methylbut-2-enyl diphosphate. The dimethylallyl diphosphate site is built by serine 225, serine 226, asparagine 227, and serine 269. 4 residues coordinate isopentenyl diphosphate: serine 225, serine 226, asparagine 227, and serine 269.

It belongs to the IspH family. It depends on [4Fe-4S] cluster as a cofactor.

The enzyme catalyses isopentenyl diphosphate + 2 oxidized [2Fe-2S]-[ferredoxin] + H2O = (2E)-4-hydroxy-3-methylbut-2-enyl diphosphate + 2 reduced [2Fe-2S]-[ferredoxin] + 2 H(+). The catalysed reaction is dimethylallyl diphosphate + 2 oxidized [2Fe-2S]-[ferredoxin] + H2O = (2E)-4-hydroxy-3-methylbut-2-enyl diphosphate + 2 reduced [2Fe-2S]-[ferredoxin] + 2 H(+). Its pathway is isoprenoid biosynthesis; dimethylallyl diphosphate biosynthesis; dimethylallyl diphosphate from (2E)-4-hydroxy-3-methylbutenyl diphosphate: step 1/1. It participates in isoprenoid biosynthesis; isopentenyl diphosphate biosynthesis via DXP pathway; isopentenyl diphosphate from 1-deoxy-D-xylulose 5-phosphate: step 6/6. In terms of biological role, catalyzes the conversion of 1-hydroxy-2-methyl-2-(E)-butenyl 4-diphosphate (HMBPP) into a mixture of isopentenyl diphosphate (IPP) and dimethylallyl diphosphate (DMAPP). Acts in the terminal step of the DOXP/MEP pathway for isoprenoid precursor biosynthesis. This is 4-hydroxy-3-methylbut-2-enyl diphosphate reductase from Aliivibrio fischeri (strain MJ11) (Vibrio fischeri).